A 512-amino-acid polypeptide reads, in one-letter code: Endo-1,4-beta-xylanase A (512 aa).

The signal sequence occupies residues 1–30 (MKRKVKKMAAMATSIIMAIMIILHSIPVLA). Positions 33–228 (IIYDNETGTH…SSGYANVYKN (196 aa)) constitute a GH11 domain. Glutamate 124 serves as the catalytic Nucleophile. Residue glutamate 215 is the Proton donor of the active site. CBM6 domains lie at 251–371 (SIIE…FIFS) and 388–508 (SIIQ…FVFS). Ca(2+) is bound by residues glutamate 254 and glutamate 256. Threonine 271 contacts D-xylotriose. Arginine 276 contributes to the Ca(2+) binding site. Residues 279–340 (GYIENGNTVT…SSTGSWNTYQ (62 aa)) form repeat 1. The interval 279–477 (GYIENGNTVT…GSTGSFDTYR (199 aa)) is 2 X 61 AA approximate repeats. D-xylotriose is bound by residues tyrosine 280, asparagine 337, and asparagine 364. Residues tyrosine 280, asparagine 337, and asparagine 364 each coordinate D-xylobiose. Residues aspartate 366, glutamine 391, glutamate 393, and serine 413 each contribute to the Ca(2+) site. The stretch at 416–477 (GYIENGYSTT…GSTGSFDTYR (62 aa)) is repeat 2. D-xylotriose-binding residues include tyrosine 417, aspartate 474, and asparagine 501. Aspartate 503 lines the Ca(2+) pocket.

The protein belongs to the glycosyl hydrolase 11 (cellulase G) family.

It carries out the reaction Endohydrolysis of (1-&gt;4)-beta-D-xylosidic linkages in xylans.. It participates in glycan degradation; xylan degradation. The chain is Endo-1,4-beta-xylanase A (xynA) from Thermoclostridium stercorarium (Clostridium stercorarium).